The primary structure comprises 291 residues: Gamma-sarcoglycan (291 aa).

Residues 1 to 37 (MVREQYTTATEGICIERPENQYVYKIGIYGWRKRCLY) are Cytoplasmic-facing. A helical; Signal-anchor for type II membrane protein membrane pass occupies residues 38 to 58 (LFVLLLLIILVVNLALTIWIL). The Extracellular portion of the chain corresponds to 59–291 (KVMWFSPAGM…TCQEHNHICL (233 aa)). Asn-110 carries N-linked (GlcNAc...) asparagine glycosylation. 2 disulfide bridges follow: Cys-265/Cys-290 and Cys-267/Cys-283.

The protein belongs to the sarcoglycan beta/delta/gamma/zeta family. Interacts with the syntrophin SNTA1. Cross-link to form 2 major subcomplexes: one consisting of SGCB, SGCD and SGCG and the other consisting of SGCB and SGCD. The association between SGCB and SGCG is particularly strong while SGCA is loosely associated with the other sarcoglycans. Interacts with FLNC. Expressed in skeletal and heart muscle.

The protein resides in the cell membrane. The protein localises to the sarcolemma. It localises to the cytoplasm. It is found in the cytoskeleton. In terms of biological role, component of the sarcoglycan complex, a subcomplex of the dystrophin-glycoprotein complex which forms a link between the F-actin cytoskeleton and the extracellular matrix. This chain is Gamma-sarcoglycan (SGCG), found in Homo sapiens (Human).